Consider the following 485-residue polypeptide: Lysine--tRNA ligase (485 aa).

Residues glutamate 391 and glutamate 398 each coordinate Mg(2+).

This sequence belongs to the class-II aminoacyl-tRNA synthetase family. Homodimer. It depends on Mg(2+) as a cofactor.

The protein localises to the cytoplasm. It catalyses the reaction tRNA(Lys) + L-lysine + ATP = L-lysyl-tRNA(Lys) + AMP + diphosphate. In Blochmanniella floridana, this protein is Lysine--tRNA ligase.